The chain runs to 354 residues: Histone-lysine N-methyltransferase SUVR3 (354 aa).

Residues 143-188 (SGCECERCEEGYCKCLAFAGMEEIANECGSGCGCGSDCSNRVTQKG) enclose the Pre-SET domain. Cysteine 145, cysteine 147, cysteine 150, cysteine 155, cysteine 157, cysteine 170, cysteine 174, cysteine 176, and cysteine 180 together coordinate Zn(2+). Residues 191-323 (VSLKIVRDEK…AEEELSFSYG (133 aa)) form the SET domain. Residues 201–203 (KGW) and 281–282 (NH) each bind S-adenosyl-L-methionine. Position 284 (cysteine 284) interacts with Zn(2+). Tyrosine 322 provides a ligand contact to S-adenosyl-L-methionine. The 17-residue stretch at 334-350 (DKLNCSCGSSCCLGTLP) folds into the Post-SET domain. Residues cysteine 338, cysteine 340, and cysteine 345 each coordinate Zn(2+).

This sequence belongs to the class V-like SAM-binding methyltransferase superfamily.

It localises to the nucleus. The protein resides in the chromosome. It carries out the reaction L-lysyl-[histone] + S-adenosyl-L-methionine = N(6)-methyl-L-lysyl-[histone] + S-adenosyl-L-homocysteine + H(+). Its function is as follows. Histone methyltransferase. The chain is Histone-lysine N-methyltransferase SUVR3 (SUVR3) from Arabidopsis thaliana (Mouse-ear cress).